Reading from the N-terminus, the 88-residue chain is Sm-like protein LSM5 (88 aa).

Alanine 2 bears the N-acetylalanine mark. Residues 9-84 (LPSELIDRCI…IAILVPGGSP (76 aa)) enclose the Sm domain.

This sequence belongs to the snRNP Sm proteins family. In terms of assembly, component of the heptameric LSM1-LSM7 complex that forms a seven-membered ring structure with a donut shape. The LSM subunits are arranged in the order LSM1, LSM2, LSM3, LSM6, LSM5, LSM7 and LSM4. Component of the heptameric LSM2-LSM8 complex that forms a seven-membered ring structure with a donut shape. The LSM subunits are arranged in the order LSM8, LSM2, LSM3, LSM6, LSM5, LSM7 and LSM4. LSM2 subunit interacts only with its two neighboring subunits, LSM6A or LSM6B and LSM7. In terms of tissue distribution, expressed in roots, leaves, stems, flowers and siliques.

It localises to the cytoplasm. Its subcellular location is the nucleus. In terms of biological role, component of LSM protein complexes, which are involved in RNA processing. Component of the cytoplasmic LSM1-LSM7 complex which is involved in mRNA degradation by promoting decapping and leading to accurate 5'-3' mRNA decay. The cytoplasmic LSM1-LSM7 complex regulates developmental gene expression by the decapping of specific development-related transcripts. Component of the nuclear LSM2-LSM8 complex which is involved splicing nuclear mRNAs. LSM2-LSM8 binds directly to the U6 small nuclear RNAs (snRNAs) and is essential for accurate splicing of selected development-related mRNAs through the stabilization of the spliceosomal U6 snRNA. Plays a critical role in the regulation of development-related gene expression. Involved in the control of plant sensitivity to abscisic acid (ABA) and drought. Functions with ABH1 as negative regulator of ABA signaling in guard cells. Required for regulation of splicing efficiency of many stress-responsive genes under stress conditions. In Arabidopsis thaliana (Mouse-ear cress), this protein is Sm-like protein LSM5.